The following is a 135-amino-acid chain: Transmembrane protein 107 (135 aa).

The next 4 helical transmembrane spans lie at Leu-7 to Trp-27, Val-55 to Val-75, Ala-83 to His-103, and Tyr-110 to Leu-130.

It is found in the membrane. Its function is as follows. May play a role in cilia formation and embryonic patterning. The protein is Transmembrane protein 107 (tmem107) of Danio rerio (Zebrafish).